The primary structure comprises 331 residues: Phenylalanine--tRNA ligase alpha subunit (331 aa).

Glutamate 252 lines the Mg(2+) pocket.

It belongs to the class-II aminoacyl-tRNA synthetase family. Phe-tRNA synthetase alpha subunit type 1 subfamily. As to quaternary structure, tetramer of two alpha and two beta subunits. Mg(2+) serves as cofactor.

The protein localises to the cytoplasm. It catalyses the reaction tRNA(Phe) + L-phenylalanine + ATP = L-phenylalanyl-tRNA(Phe) + AMP + diphosphate + H(+). This chain is Phenylalanine--tRNA ligase alpha subunit, found in Hahella chejuensis (strain KCTC 2396).